The chain runs to 228 residues: Fibrillarin-like rRNA/tRNA 2'-O-methyltransferase (228 aa).

Residues 85 to 86, 103 to 104, 128 to 129, and 148 to 151 contribute to the S-adenosyl-L-methionine site; these read TT, EF, DA, and DVAQ.

It belongs to the methyltransferase superfamily. Fibrillarin family. Interacts with nop5. Component of box C/D small ribonucleoprotein (sRNP) particles that contain rpl7ae, FlpA and nop5, plus a guide RNA.

Involved in pre-rRNA and tRNA processing. Utilizes the methyl donor S-adenosyl-L-methionine to catalyze the site-specific 2'-hydroxyl methylation of ribose moieties in rRNA and tRNA. Site specificity is provided by a guide RNA that base pairs with the substrate. Methylation occurs at a characteristic distance from the sequence involved in base pairing with the guide RNA. This chain is Fibrillarin-like rRNA/tRNA 2'-O-methyltransferase, found in Methanococcus voltae.